A 244-amino-acid chain; its full sequence is Small ribosomal subunit protein uS3 (244 aa).

Positions Ile38–Lys106 constitute a KH type-2 domain. Residues Thr217 to Arg244 are disordered. A compositionally biased stretch (gly residues) spans Gly225–Lys235.

The protein belongs to the universal ribosomal protein uS3 family. In terms of assembly, part of the 30S ribosomal subunit. Forms a tight complex with proteins S10 and S14.

Its function is as follows. Binds the lower part of the 30S subunit head. Binds mRNA in the 70S ribosome, positioning it for translation. The chain is Small ribosomal subunit protein uS3 from Bacteroides fragilis (strain ATCC 25285 / DSM 2151 / CCUG 4856 / JCM 11019 / LMG 10263 / NCTC 9343 / Onslow / VPI 2553 / EN-2).